Reading from the N-terminus, the 547-residue chain is Chaperonin GroEL (547 aa).

Residues 30–33, K51, 87–91, G415, and D496 each bind ATP; these read TLGP and DGTTT. Residues 528-547 form a disordered region; it reads KEGAGAGGGMPDMGGMGGMM. A compositionally biased stretch (gly residues) spans 531-547; that stretch reads AGAGGGMPDMGGMGGMM.

The protein belongs to the chaperonin (HSP60) family. As to quaternary structure, forms a cylinder of 14 subunits composed of two heptameric rings stacked back-to-back. Interacts with the co-chaperonin GroES.

Its subcellular location is the cytoplasm. The catalysed reaction is ATP + H2O + a folded polypeptide = ADP + phosphate + an unfolded polypeptide.. In terms of biological role, together with its co-chaperonin GroES, plays an essential role in assisting protein folding. The GroEL-GroES system forms a nano-cage that allows encapsulation of the non-native substrate proteins and provides a physical environment optimized to promote and accelerate protein folding. This is Chaperonin GroEL from Dinoroseobacter shibae (strain DSM 16493 / NCIMB 14021 / DFL 12).